The sequence spans 445 residues: UPF0210 protein SP_0239 (445 aa).

It belongs to the UPF0210 family. In terms of assembly, homodimer.

The protein is UPF0210 protein SP_0239 of Streptococcus pneumoniae serotype 4 (strain ATCC BAA-334 / TIGR4).